Reading from the N-terminus, the 140-residue chain is Putative pre-16S rRNA nuclease (140 aa).

This sequence belongs to the YqgF nuclease family.

It localises to the cytoplasm. Its function is as follows. Could be a nuclease involved in processing of the 5'-end of pre-16S rRNA. In Serratia proteamaculans (strain 568), this protein is Putative pre-16S rRNA nuclease.